The sequence spans 225 residues: Phosphatidylserine decarboxylase proenzyme (225 aa).

The active-site Schiff-base intermediate with substrate; via pyruvic acid is the S189. At S189 the chain carries Pyruvic acid (Ser); by autocatalysis.

This sequence belongs to the phosphatidylserine decarboxylase family. PSD-A subfamily. Heterodimer of a large membrane-associated beta subunit and a small pyruvoyl-containing alpha subunit. Requires pyruvate as cofactor. Post-translationally, is synthesized initially as an inactive proenzyme. Formation of the active enzyme involves a self-maturation process in which the active site pyruvoyl group is generated from an internal serine residue via an autocatalytic post-translational modification. Two non-identical subunits are generated from the proenzyme in this reaction, and the pyruvate is formed at the N-terminus of the alpha chain, which is derived from the carboxyl end of the proenzyme. The post-translation cleavage follows an unusual pathway, termed non-hydrolytic serinolysis, in which the side chain hydroxyl group of the serine supplies its oxygen atom to form the C-terminus of the beta chain, while the remainder of the serine residue undergoes an oxidative deamination to produce ammonia and the pyruvoyl prosthetic group on the alpha chain.

It localises to the cell membrane. It carries out the reaction a 1,2-diacyl-sn-glycero-3-phospho-L-serine + H(+) = a 1,2-diacyl-sn-glycero-3-phosphoethanolamine + CO2. It functions in the pathway phospholipid metabolism; phosphatidylethanolamine biosynthesis; phosphatidylethanolamine from CDP-diacylglycerol: step 2/2. Functionally, catalyzes the formation of phosphatidylethanolamine (PtdEtn) from phosphatidylserine (PtdSer). This chain is Phosphatidylserine decarboxylase proenzyme, found in Amoebophilus asiaticus (strain 5a2).